The primary structure comprises 216 residues: Chaperone protein TorD (216 aa).

It belongs to the TorD/DmsD family. TorD subfamily.

It is found in the cytoplasm. Its function is as follows. Involved in the biogenesis of TorA. Acts on TorA before the insertion of the molybdenum cofactor and, as a result, probably favors a conformation of the apoenzyme that is competent for acquiring the cofactor. In Photobacterium profundum (strain SS9), this protein is Chaperone protein TorD.